The chain runs to 776 residues: Calcium-independent phospholipase A2-gamma (776 aa).

N-linked (GlcNAc...) asparagine glycosylation is found at N4 and N157. Disordered regions lie at residues 216 to 276 (KGKM…HPVS) and 306 to 334 (KLKS…DKKA). 2 stretches are compositionally biased toward basic and acidic residues: residues 221–239 (QTKE…ERKS) and 247–263 (VADR…KDKL). Residues 439–634 (LTIDGGGTRG…LLNNPSALAL (196 aa)) form the PNPLA domain. Positions 443–448 (GGGTRG) match the GXGXXG motif. A helical membrane pass occupies residues 469 to 489 (LFDYICGVSTGAILAFMLGLF). Positions 475-479 (GVSTG) match the GXSXG motif. The active-site Nucleophile is the S477. The active-site Proton acceptor is D621. The short motif at 621-623 (DGG) is the DGA/G element. N6-succinyllysine is present on K730.

In terms of tissue distribution, expressed in myocardium (at protein level).

It is found in the endoplasmic reticulum membrane. The protein localises to the mitochondrion membrane. The protein resides in the peroxisome membrane. It carries out the reaction a 1,2-diacyl-sn-glycero-3-phosphocholine + H2O = a 1-acyl-sn-glycero-3-phosphocholine + a fatty acid + H(+). The catalysed reaction is a 1,2-diacyl-sn-glycero-3-phosphocholine + H2O = a 2-acyl-sn-glycero-3-phosphocholine + a fatty acid + H(+). The enzyme catalyses a 1,2-diacyl-sn-glycero-3-phosphoethanolamine + H2O = a 1-acyl-sn-glycero-3-phosphoethanolamine + a fatty acid + H(+). It catalyses the reaction a 1-O-(1Z-alkenyl)-2-acyl-sn-glycero-3-phosphocholine + H2O = a 1-O-(1Z-alkenyl)-sn-glycero-3-phosphocholine + a fatty acid + H(+). It carries out the reaction a 1-acyl-sn-glycero-3-phosphocholine + H2O = sn-glycerol 3-phosphocholine + a fatty acid + H(+). The catalysed reaction is 1-hexadecanoyl-2-(5Z,8Z,11Z,14Z-eicosatetraenoyl)-sn-glycero-3-phosphocholine + H2O = 2-(5Z,8Z,11Z,14Z)-eicosatetraenoyl-sn-glycero-3-phosphocholine + hexadecanoate + H(+). The enzyme catalyses 1-acyl-2-(9Z,12Z)-octadecadienoyl-sn-glycero-3-phosphocholine + H2O = a 1-acyl-sn-glycero-3-phosphocholine + (9Z,12Z)-octadecadienoate + H(+). It catalyses the reaction 1-acyl-2-(5Z,8Z,11Z,14Z-eicosatetraenoyl)-sn-glycero-3-phosphocholine + H2O = a 1-acyl-sn-glycero-3-phosphocholine + (5Z,8Z,11Z,14Z)-eicosatetraenoate + H(+). It carries out the reaction 1-hexadecanoyl-2-(5Z,8Z,11Z,14Z-eicosatetraenoyl)-sn-glycero-3-phosphocholine + H2O = 1-hexadecanoyl-sn-glycero-3-phosphocholine + (5Z,8Z,11Z,14Z)-eicosatetraenoate + H(+). The catalysed reaction is 1-octadecanoyl-2-(9Z-octadecenoyl)-sn-glycero-3-phosphocholine + H2O = 1-octadecanoyl-sn-glycero-3-phosphocholine + (9Z)-octadecenoate + H(+). The enzyme catalyses 1-hexadecanoyl-2-(9Z-octadecenoyl)-sn-glycero-3-phosphocholine + H2O = 1-hexadecanoyl-sn-glycero-3-phosphocholine + (9Z)-octadecenoate + H(+). It catalyses the reaction 1-hexadecanoyl-2-(9Z,12Z-octadecadienoyl)-sn-glycero-3-phosphocholine + H2O = (9Z,12Z)-octadecadienoate + 1-hexadecanoyl-sn-glycero-3-phosphocholine + H(+). It carries out the reaction 1-acyl-2-(9Z,12Z)-octadecadienoyl-sn-glycero-3-phosphoethanolamine + H2O = a 1-acyl-sn-glycero-3-phosphoethanolamine + (9Z,12Z)-octadecadienoate + H(+). The catalysed reaction is 1-acyl-2-(5Z,8Z,11Z,14Z)-eicosatetraenoyl-sn-glycero-3-phosphoethanolamine + H2O = a 1-acyl-sn-glycero-3-phosphoethanolamine + (5Z,8Z,11Z,14Z)-eicosatetraenoate + H(+). The enzyme catalyses 1-hexadecanoyl-2-(5Z,8Z,11Z,14Z-eicosatetraenoyl)-sn-glycero-3-phosphoethanolamine + H2O = 1-hexadecanoyl-sn-glycero-3-phosphoethanolamine + (5Z,8Z,11Z,14Z)-eicosatetraenoate + H(+). It catalyses the reaction 1-octadecanoyl-2-(9Z-octadecenoyl)-sn-glycero-3-phosphocholine + H2O = 2-(9Z-octadecenoyl)-sn-glycero-3-phosphocholine + octadecanoate + H(+). It carries out the reaction 1-hexadecanoyl-2-(4Z,7Z,10Z,13Z,16Z,19Z-docosahexaenoyl)-sn-glycero-3-phosphocholine + H2O = 2-(4Z,7Z,10Z,13Z,16Z,19Z-docosahexaenoyl)-sn-glycero-3-phosphocholine + hexadecanoate + H(+). The catalysed reaction is 1-O-(1Z)-hexadecenyl-2 (5Z,8Z,11Z,14Z)-eicosatetraenoyl-sn-glycero-3-phosphocholine + H2O = 1-(1Z-hexadecenyl)-sn-glycero-3-phosphocholine + (5Z,8Z,11Z,14Z)-eicosatetraenoate + H(+). The enzyme catalyses 1-O-(1Z-hexadecenyl)-2-(9Z-octadecenoyl)-sn-glycero-3-phosphocholine + H2O = 1-(1Z-hexadecenyl)-sn-glycero-3-phosphocholine + (9Z)-octadecenoate + H(+). It catalyses the reaction 1-hexadecanoyl-sn-glycero-3-phosphocholine + H2O = sn-glycerol 3-phosphocholine + hexadecanoate + H(+). It carries out the reaction 1',3'-bis-[1,2-di-(9Z,12Z-octadecadienoyl)-sn-glycero-3-phospho]-glycerol + H2O = 1'-[1,2-di-(9Z,12Z-octadecadienoyl)-sn-glycero-3-phospho]-3'-[1-(9Z,12Z-octadecadienoyl)-sn-glycero-3-phospho]-glycerol + (9Z,12Z)-octadecadienoate + H(+). The catalysed reaction is 1'-[1-acyl-2-(9-hydroxy-(10E,12Z)-octadecadienoyl)-sn-glycero-3-phospho]-3'-[1,2-diacyl-sn-glycero-3-phospho]-glycerol + H2O = 9-hydroxy-(10E,12Z)-octadecadienoate + 1'-[1,2-diacyl-sn-glycero-3-phospho],3'-[1-acyl-sn-glycero-3-phospho]-glycerol + H(+). It functions in the pathway phospholipid metabolism. With respect to regulation, calcium-independent phospholipase. Its function is as follows. Calcium-independent and membrane-bound phospholipase, that catalyzes the esterolytic cleavage of fatty acids from glycerophospholipids to yield free fatty acids and lysophospholipids, hence regulating membrane physical properties and the release of lipid second messengers and growth factors. Hydrolyzes phosphatidylethanolamine, phosphatidylcholine and probably phosphatidylinositol with a possible preference for the former. Also has a broad substrate specificity in terms of fatty acid moieties, hydrolyzing saturated and mono-unsaturated fatty acids at nearly equal rates from either the sn-1 or sn-2 position in diacyl phosphatidylcholine. However, has a weak activity toward polyunsaturated fatty acids at the sn-2 position, and thereby favors the production of 2-arachidonoyl lysophosphatidylcholine, a key branch point metabolite in eicosanoid signaling. On the other hand, can produce arachidonic acid from the sn-1 position of diacyl phospholipid and from the sn-2 position of arachidonate-containing plasmalogen substrates. Therefore, plays an important role in the mobilization of arachidonic acid in response to cellular stimuli and the generation of lipid second messengers. Can also hydrolyze lysophosphatidylcholine. In the mitochondrial compartment, catalyzes the hydrolysis and release of oxidized aliphatic chains from cardiolipin and integrates mitochondrial bioenergetics and signaling. It is essential for maintaining efficient bioenergetic mitochondrial function through tailoring mitochondrial membrane lipid metabolism and composition. The protein is Calcium-independent phospholipase A2-gamma of Mus musculus (Mouse).